Here is a 620-residue protein sequence, read N- to C-terminus: Chaperone protein HscA homolog (620 aa).

This sequence belongs to the heat shock protein 70 family.

Chaperone involved in the maturation of iron-sulfur cluster-containing proteins. Has a low intrinsic ATPase activity which is markedly stimulated by HscB. This chain is Chaperone protein HscA homolog, found in Shewanella piezotolerans (strain WP3 / JCM 13877).